The chain runs to 556 residues: MKTDIEIAQSIELKPIVDVVEKLGISYDDLELYGKYKAKLSFDKIRAVESNPVGKLILVTAINPTPAGEGKSTLTIGLADALNKIGKKTMIAIREPSLGPVMGIKGGAAGGGYAQVLPMEDINLHFTGDMHAITTANNALSALIDNHLHQGNELGIDQRRILWKRVVDLNDRALRHVTVGLGGPLNGIPREDGFDITVASEIMAILCLATDIEDLKRRLANIVIGYRYDRTPVSVGDLQVEGALALILKDAIKPNLVQTIYGTPAFVHGGPFANIAHGCNSVLATTTALHLADYTVTEAGFGADLGAEKFLDIKTPNLPTSPDAVVIVATLRALKMNGGVAKDALTEENVEAVRAGFANLKRHVENIRKFGIPAVVAINEFVSDTEAEIAALKELCASIDVPVELASVWADGAEGGVALAETVVKTIAENPANYKRLYDNDLSVQEKIEKIVTEIYRGSKVNFEKKAQTQIAQIVQNGWDKLPICMAKTQYSFSDNPNALGAPENFEITIRELVPKLGAGFIVALTGDVMTMPGLPKRPAALNMDVESDGTVLGLF.

Residue 65 to 72 coordinates ATP; it reads TPAGEGKS.

The protein belongs to the formate--tetrahydrofolate ligase family.

The enzyme catalyses (6S)-5,6,7,8-tetrahydrofolate + formate + ATP = (6R)-10-formyltetrahydrofolate + ADP + phosphate. The protein operates within one-carbon metabolism; tetrahydrofolate interconversion. This Streptococcus pneumoniae (strain Taiwan19F-14) protein is Formate--tetrahydrofolate ligase.